A 538-amino-acid chain; its full sequence is DALR anticodon-binding domain-containing protein 3 (538 aa).

As to quaternary structure, part of a complex containing tRNA(Arg) and METTL2. Interacts with tRNA(Arg)(CCU) and tRNA(Arg)(UCU). Interacts with METTL2.

Its function is as follows. Involved in tRNA methylation. Facilitates the recognition and targeting of tRNA(Arg)(CCU) and tRNA(Arg)(UCU) substrates for N(3)-methylcytidine modification by METTL2. In Mus musculus (Mouse), this protein is DALR anticodon-binding domain-containing protein 3 (Dalrd3).